Reading from the N-terminus, the 286-residue chain is ATP synthase gamma chain (286 aa).

It belongs to the ATPase gamma chain family. As to quaternary structure, F-type ATPases have 2 components, CF(1) - the catalytic core - and CF(0) - the membrane proton channel. CF(1) has five subunits: alpha(3), beta(3), gamma(1), delta(1), epsilon(1). CF(0) has three main subunits: a, b and c.

It is found in the cell inner membrane. Functionally, produces ATP from ADP in the presence of a proton gradient across the membrane. The gamma chain is believed to be important in regulating ATPase activity and the flow of protons through the CF(0) complex. This is ATP synthase gamma chain from Shewanella pealeana (strain ATCC 700345 / ANG-SQ1).